The primary structure comprises 249 residues: 2,3-bisphosphoglycerate-dependent phosphoglycerate mutase (249 aa).

Substrate contacts are provided by residues 9 to 16, 22 to 23, arginine 61, 88 to 91, lysine 99, 115 to 116, and 184 to 185; these read RHGQSQWN, TG, ERHY, RR, and GN. Residue histidine 10 is the Tele-phosphohistidine intermediate of the active site. Glutamate 88 serves as the catalytic Proton donor/acceptor.

Belongs to the phosphoglycerate mutase family. BPG-dependent PGAM subfamily. Homodimer.

The catalysed reaction is (2R)-2-phosphoglycerate = (2R)-3-phosphoglycerate. It functions in the pathway carbohydrate degradation; glycolysis; pyruvate from D-glyceraldehyde 3-phosphate: step 3/5. Functionally, catalyzes the interconversion of 2-phosphoglycerate and 3-phosphoglycerate. The sequence is that of 2,3-bisphosphoglycerate-dependent phosphoglycerate mutase from Xanthomonas oryzae pv. oryzae (strain PXO99A).